A 223-amino-acid polypeptide reads, in one-letter code: Neurotrophic factor BDNF precursor form (223 aa).

Positions 1 to 5 (SCMKA) are cleaved as a signal peptide. The propeptide occupies 6–114 (APMKEVSIRG…AANMSMRVRR (109 aa)). The N-linked (GlcNAc...) asparagine glycan is linked to Asn107. Cystine bridges form between Cys127/Cys194 and Cys172/Cys223.

Belongs to the NGF-beta family.

Its subcellular location is the secreted. Functionally, promotes the survival of neuronal populations that are all located either in the central nervous system or directly connected to it. The sequence is that of Neurotrophic factor BDNF precursor form (BDNF) from Calabaria reinhardtii (Calabar boa).